The primary structure comprises 403 residues: RUN domain-containing protein 3B (403 aa).

Positions 1–20 are disordered; sequence MASRSLGGLSGSRGGGKKSL. Arg13 is modified (omega-N-methylarginine). In terms of domain architecture, RUN spans 53 to 185; it reads DDSSPEFNNF…IDFSFCLKGE (133 aa). The disordered stretch occupies residues 207–232; that stretch reads SDSISSDEEELRTFGSSDSEGSTPEN. Phosphoserine is present on residues Ser211 and Ser212. Residues 220–231 show a composition bias toward polar residues; sequence FGSSDSEGSTPE. The stretch at 296-321 forms a coiled coil; it reads AHKLEKEQLEYIIVELQDQLKSYQSL.

This sequence belongs to the RUNDC3 family. As to quaternary structure, interacts with RAP2A.

The chain is RUN domain-containing protein 3B (Rundc3b) from Rattus norvegicus (Rat).